The chain runs to 412 residues: Potassium channel, subfamily K, member 13 (412 aa).

Topologically, residues 1 to 21 (MACRSGCCCNSIGSFNEDNAR) are cytoplasmic. Residues 22–42 (FLMLALLIIIYLLCGAAVFSA) traverse the membrane as a helical segment. The segment at residues 97–117 (WDFAGAFYFVGTVVSTIGFGM) is an intramembrane region (pore-forming). K(+) is bound by residues Thr-112, Ile-113, and Gly-114. Positions 112-117 (TIGFGM) are selectivity filter 1. A helical transmembrane segment spans residues 127-147 (IFLIFYGLIGCAATILFFNLF). The Cytoplasmic portion of the chain corresponds to 148–198 (LERVITVIAFVLKFCHERRESRKAGPTQNCRRPSTDNRDRRTDSLAGWKPS). A helical membrane pass occupies residues 199–219 (VYCVMLILGVAAILVSCCASA). An intramembrane region (pore-forming) is located at residues 229–249 (YLDALYFCFVAFSTIGFGDMV). K(+) contacts are provided by Thr-242, Ile-243, Gly-244, and Phe-245. Residues 242–247 (TIGFGD) form a selectivity filter 2 region. The helical transmembrane segment at 268–288 (LFILTGVCCIYSLFNVISIVI) threads the bilayer. Over 289-412 (KQVLNWLLRR…NRLAETSVDR (124 aa)) the chain is Cytoplasmic. Over residues 374 to 386 (MANGHPRQSGSSS) the composition is skewed to polar residues. Residues 374-395 (MANGHPRQSGSSSRHNEFSGGV) are disordered.

This sequence belongs to the two pore domain potassium channel (TC 1.A.1.8) family. Homodimer. Heterodimer. As to expression, brain and heart.

The protein localises to the cell membrane. It carries out the reaction K(+)(in) = K(+)(out). The channel conductance is activated by arachidonic acid and inhibited by Ba(2+) ions, volatile anesthetics such as halothane and antiarrhythmic drug mexiletine. Insensitive to extracellular pH change. Its function is as follows. K(+) channel that conducts outward rectifying tonic currents potentiated by purinergic signals. Homo- and heterodimerizes to form functional channels with distinct regulatory and gating properties. Contributes most of K(+) currents at the plasma membrane of resting microglia. Maintains a depolarized membrane potential required for proper ramified microglia morphology and phagocytosis, selectively mediating microglial pruning of presynaptic compartments at hippocampal excitatory synapses. Upon local release of ATP caused by neuronal injury or infection, it is potentiated by purinergic signaling and contributes to ATP-triggered K(+) efflux underlying microglial NLRP3 inflammasome assembly and IL1B release. This is Potassium channel, subfamily K, member 13 from Danio rerio (Zebrafish).